The sequence spans 368 residues: Glutaminyl-peptide cyclotransferase (368 aa).

The first 23 residues, 1-23, serve as a signal peptide directing secretion; sequence MAGERRDSKAAAFFCLAWALCLA. A glycan (N-linked (GlcNAc...) asparagine) is linked at Asn-53. Cys-143 and Cys-169 are oxidised to a cystine. Asp-164 contributes to the Zn(2+) binding site. Catalysis depends on Glu-207, which acts as the Proton acceptor. Glu-208 serves as a coordination point for Zn(2+). Asp-254 (proton acceptor) is an active-site residue. Residue Asn-292 is glycosylated (N-linked (GlcNAc...) asparagine). His-336 provides a ligand contact to Zn(2+). Asn-352 carries N-linked (GlcNAc...) asparagine glycosylation.

The protein belongs to the glutaminyl-peptide cyclotransferase family. In terms of tissue distribution, expressed by the venom gland.

The protein localises to the secreted. The catalysed reaction is N-terminal L-glutaminyl-[peptide] = N-terminal 5-oxo-L-prolyl-[peptide] + NH4(+). Responsible for the biosynthesis of pyroglutamyl peptides. Has a bias against acidic and tryptophan residues adjacent to the N-terminal glutaminyl residue and a lack of importance of chain length after the second residue. Also catalyzes N-terminal pyroglutamate formation. This chain is Glutaminyl-peptide cyclotransferase (QPCT), found in Boiga dendrophila (Mangrove snake).